The chain runs to 86 residues: Ferredoxin-like protein YgcO (86 aa).

The 4Fe-4S ferredoxin-type domain maps to 45–74 (GNLRIDYRSCLECGTCRLLCDESTLQQWRY).

The protein belongs to the bacterial-type ferredoxin family. FixX subfamily.

Functionally, could be a 3Fe-4S cluster-containing protein. Probably participates in a redox process with YgcN, YgcQ and YgcR. The chain is Ferredoxin-like protein YgcO (ygcO) from Escherichia coli (strain K12).